Here is a 1111-residue protein sequence, read N- to C-terminus: Cellulose synthase-like protein D4 (1111 aa).

Disordered stretches follow at residues 1–26 and 175–202; these read MAST…KFAR and DYSS…MMKR. Residues 192–202 are compositionally biased toward polar residues; it reads GNNNNMSMMKR. Helical transmembrane passes span 266 to 286 and 297 to 317; these read AIIS…CFFL and AIWL…SWIL. Catalysis depends on residues D397 and D809. 6 consecutive transmembrane segments (helical) span residues 891-911, 914-934, 963-983, 1007-1027, 1040-1060, and 1070-1090; these read LFLI…QFIV, LSIS…GLAV, LYAV…SFTL, LMIP…VAFI, LIGG…FAKG, and TIVF…WTAI.

Belongs to the glycosyltransferase 2 family. Plant cellulose synthase-like D subfamily.

Its subcellular location is the golgi apparatus membrane. Thought to be a Golgi-localized beta-glycan synthase that polymerize the backbones of noncellulosic polysaccharides (hemicelluloses) of plant cell wall. This is Cellulose synthase-like protein D4 (CSLD4) from Arabidopsis thaliana (Mouse-ear cress).